Here is a 717-residue protein sequence, read N- to C-terminus: Ribosomal RNA large subunit methyltransferase K/L (717 aa).

The THUMP domain maps to Asp44–Leu155.

The protein belongs to the methyltransferase superfamily. RlmKL family.

It is found in the cytoplasm. The enzyme catalyses guanosine(2445) in 23S rRNA + S-adenosyl-L-methionine = N(2)-methylguanosine(2445) in 23S rRNA + S-adenosyl-L-homocysteine + H(+). It catalyses the reaction guanosine(2069) in 23S rRNA + S-adenosyl-L-methionine = N(2)-methylguanosine(2069) in 23S rRNA + S-adenosyl-L-homocysteine + H(+). Functionally, specifically methylates the guanine in position 2445 (m2G2445) and the guanine in position 2069 (m7G2069) of 23S rRNA. This is Ribosomal RNA large subunit methyltransferase K/L from Francisella tularensis subsp. tularensis (strain WY96-3418).